The sequence spans 105 residues: Urease subunit beta (105 aa).

Belongs to the urease beta subunit family. Heterotrimer of UreA (gamma), UreB (beta) and UreC (alpha) subunits. Three heterotrimers associate to form the active enzyme.

It is found in the cytoplasm. The enzyme catalyses urea + 2 H2O + H(+) = hydrogencarbonate + 2 NH4(+). It participates in nitrogen metabolism; urea degradation; CO(2) and NH(3) from urea (urease route): step 1/1. The sequence is that of Urease subunit beta from Shewanella halifaxensis (strain HAW-EB4).